We begin with the raw amino-acid sequence, 2318 residues long: Neurogenic locus notch homolog protein 3 (2318 aa).

A compositionally biased stretch (basic residues) spans 1-14 (MGLGARGRRRRRRL). A disordered region spans residues 1-20 (MGLGARGRRRRRRLMALPPP). An N-terminal signal peptide occupies residues 1–39 (MGLGARGRRRRRRLMALPPPPPPMRALPLLLLLAGLGAA). EGF-like domains are found at residues 40-78 (APPCLDGSPCANGGRCTHQQPSLEAACLCLPGWVGERCQ), 79-119 (LEDP…PDCS), and 120-157 (QPDPCVSRPCVHGAPCSVGPDGRFACACPPGYQGQSCQ). Over 40-1643 (APPCLDGSPC…PLEAPEQSVP (1604 aa)) the chain is Extracellular. Intrachain disulfides connect cysteine 43-cysteine 55, cysteine 49-cysteine 66, cysteine 68-cysteine 77, cysteine 83-cysteine 94, cysteine 88-cysteine 107, cysteine 109-cysteine 118, cysteine 124-cysteine 135, cysteine 129-cysteine 145, cysteine 147-cysteine 156, cysteine 163-cysteine 175, cysteine 169-cysteine 184, cysteine 186-cysteine 195, cysteine 202-cysteine 213, cysteine 207-cysteine 223, cysteine 225-cysteine 234, cysteine 241-cysteine 252, cysteine 246-cysteine 261, cysteine 263-cysteine 272, cysteine 279-cysteine 292, cysteine 286-cysteine 301, cysteine 303-cysteine 312, cysteine 319-cysteine 330, cysteine 324-cysteine 339, cysteine 341-cysteine 350, cysteine 356-cysteine 367, cysteine 361-cysteine 378, cysteine 380-cysteine 389, cysteine 396-cysteine 409, cysteine 403-cysteine 418, cysteine 420-cysteine 429, cysteine 436-cysteine 447, cysteine 441-cysteine 456, cysteine 458-cysteine 467, cysteine 474-cysteine 485, cysteine 479-cysteine 494, cysteine 496-cysteine 505, cysteine 512-cysteine 523, cysteine 517-cysteine 532, cysteine 534-cysteine 543, cysteine 550-cysteine 560, cysteine 555-cysteine 569, cysteine 571-cysteine 580, cysteine 587-cysteine 598, cysteine 592-cysteine 607, cysteine 609-cysteine 618, cysteine 625-cysteine 635, cysteine 630-cysteine 644, cysteine 646-cysteine 655, cysteine 662-cysteine 673, cysteine 667-cysteine 682, cysteine 684-cysteine 693, cysteine 700-cysteine 710, cysteine 705-cysteine 719, cysteine 721-cysteine 730, cysteine 739-cysteine 750, cysteine 744-cysteine 759, cysteine 761-cysteine 770, cysteine 776-cysteine 787, cysteine 781-cysteine 797, cysteine 799-cysteine 808, cysteine 815-cysteine 827, cysteine 821-cysteine 836, cysteine 838-cysteine 847, cysteine 854-cysteine 865, cysteine 859-cysteine 874, cysteine 876-cysteine 885, cysteine 892-cysteine 902, cysteine 897-cysteine 911, cysteine 913-cysteine 922, cysteine 929-cysteine 940, cysteine 934-cysteine 949, cysteine 951-cysteine 960, cysteine 967-cysteine 978, cysteine 972-cysteine 987, cysteine 989-cysteine 998, cysteine 1005-cysteine 1016, cysteine 1010-cysteine 1023, cysteine 1025-cysteine 1034, cysteine 1041-cysteine 1062, cysteine 1056-cysteine 1071, cysteine 1073-cysteine 1082, cysteine 1089-cysteine 1100, cysteine 1094-cysteine 1109, cysteine 1111-cysteine 1120, cysteine 1127-cysteine 1138, cysteine 1132-cysteine 1147, cysteine 1149-cysteine 1158, cysteine 1165-cysteine 1183, cysteine 1177-cysteine 1192, cysteine 1194-cysteine 1203, cysteine 1210-cysteine 1223, cysteine 1215-cysteine 1233, cysteine 1235-cysteine 1244, cysteine 1251-cysteine 1262, cysteine 1256-cysteine 1276, cysteine 1278-cysteine 1287, cysteine 1294-cysteine 1305, cysteine 1299-cysteine 1314, and cysteine 1316-cysteine 1325. An EGF-like 4; calcium-binding domain is found at 159 to 196 (DIDECRSGTTCRHGGTCLNTPGSFRCQCPLGYTGLLCE). In terms of domain architecture, EGF-like 5 spans 198-235 (PVVPCAPSPCRNGGTCRQSSDVTYDCACLPGFEGQNCE). Residues 237–273 (NVDDCPGHRCLNGGTCVDGVNTYNCQCPPEWTGQFCT) form the EGF-like 6; calcium-binding domain. Positions 275–313 (DVDECQLQPNACHNGGTCFNLLGGHSCVCVNGWTGESCS) constitute an EGF-like 7 domain. Residues 315-351 (NIDDCATAVCFHGATCHDRVASFYCACPMGKTGLLCH) enclose the EGF-like 8; calcium-binding domain. An EGF-like 9 domain is found at 352–390 (LDDACVSNPCHEDAICDTNPVSGRAICTCPPGFTGGACD). One can recognise an EGF-like 10; calcium-binding domain in the interval 392 to 430 (DVDECSIGANPCEHLGRCVNTQGSFLCQCGRGYTGPRCE). An EGF-like 11; calcium-binding domain is found at 432 to 468 (DVNECLSGPCRNQATCLDRIGQFTCICMAGFTGTYCE). Residues 470–506 (DIDECQSSPCVNGGVCKDRVNGFSCTCPSGFSGSMCQ) form the EGF-like 12; calcium-binding domain. Positions 508–544 (DVDECASTPCRNGAKCVDQPDGYECRCAEGFEGTLCE) constitute an EGF-like 13; calcium-binding domain. The EGF-like 14; calcium-binding domain occupies 546–581 (NVDDCSPDPCHHGRCVDGIASFSCACAPGYTGIRCE). The 37-residue stretch at 583 to 619 (QVDECRSQPCRYGGKCLDLVDKYLCRCPPGTTGVNCE) folds into the EGF-like 15; calcium-binding domain. Residues 621 to 656 (NIDDCASNPCTFGVCRDGINRYDCVCQPGFTGPLCN) form the EGF-like 16; calcium-binding domain. An EGF-like 17; calcium-binding domain is found at 658–694 (EINECASSPCGEGGSCVDGENGFHCLCPPGSLPPLCL). EGF-like domains lie at 696-731 (ANHPCAHKPCSHGVCHDAPGGFRCVCEPGWSGPRCS), 735-771 (APDACESQPCQAGGTCTSDGIGFRCTCAPGFQGHQCE), and 772-809 (VLSPCTPSLCEHGGHCESDPDRLTVCSCPPGWQGPRCQ). Residues 811 to 848 (DVDECAGASPCGPHGTCTNLPGNFRCICHRGYTGPFCD) form the EGF-like 21; calcium-binding domain. The 37-residue stretch at 850-886 (DIDDCDPNPCLHGGSCQDGVGSFSCSCLDGFAGPRCA) folds into the EGF-like 22; calcium-binding domain. Residues 888-923 (DVDECLSSPCGPGTCTDHVASFTCACPPGYGGFHCE) form the EGF-like 23; calcium-binding domain. EGF-like domains lie at 925 to 961 (DLPDCSPSSCFNGGTCVDGVSSFSCLCRPGYTGTHCQ), 963 to 999 (EADPCFSRPCLHGGICNPTHPGFECTCREGFTGSQCQ), 1001 to 1035 (PVDWCSQAPCQNGGRCVQTGAYCICPPGWSGRLCD), 1037 to 1083 (QSLP…SHCE), and 1085 to 1121 (EVDPCTAQPCQHGGTCRGYMGGYVCECPAGYAGDSCE). Positions 1123–1159 (NIDECASQPCQNGGSCIDLVARYLCSCPPGTLGVLCE) constitute an EGF-like 29; calcium-binding domain. Residues 1161 to 1204 (NEDDCDLGPSLDSGVQCLHNGTCVDLVGGFRCNCPPGYTGLHCE) enclose the EGF-like 30; calcium-binding domain. A glycan (N-linked (GlcNAc...) asparagine) is linked at asparagine 1180. 4 EGF-like domains span residues 1206-1245 (DINECRPGACHAAHTRDCLQDPGGHFRCVCHPGFTGPRCQ), 1247-1288 (ALSP…LRCE), 1290-1326 (VARSCRELQCPVGIPCQQTARGPRCACPPGLSGPSCR), and 1336-1374 (TNASCASAPCLHGGSCLPVQSVPFFRCVCAPGWGGPRCE). The N-linked (GlcNAc...) asparagine glycan is linked to asparagine 1337. Intrachain disulfides connect cysteine 1340/cysteine 1351, cysteine 1345/cysteine 1362, cysteine 1364/cysteine 1373, cysteine 1388/cysteine 1411, cysteine 1393/cysteine 1406, cysteine 1402/cysteine 1418, cysteine 1429/cysteine 1452, cysteine 1434/cysteine 1447, cysteine 1443/cysteine 1459, cysteine 1468/cysteine 1494, cysteine 1476/cysteine 1489, and cysteine 1485/cysteine 1501. 3 LNR repeats span residues 1388–1428 (CPRA…PWRQ), 1429–1466 (CEALQCWRLFNNSRCDPACSSPACLYDNFDCYSGGRDR), and 1468–1506 (CNPVYEKYCADHFADGRCDQGCNTEECGWDGLDCASEVP). The N-linked (GlcNAc...) asparagine glycan is linked to asparagine 1439. The helical transmembrane segment at 1644–1664 (LLPLLVAGAVFLLIIFILGVM) threads the bilayer. Topologically, residues 1665 to 2318 (VARRKREHST…EVTPKRQVMA (654 aa)) are cytoplasmic. ANK repeat units lie at residues 1839 to 1868 (TGETALHLAARYARADAAKRLLDAGADTNA), 1872 to 1902 (SGRTPLHTAVTADAQGVFQILIRNRSTDLDA), 1906 to 1935 (DGSTALILAARLAVEGMVEELIASHADVNA), 1939 to 1968 (LGKSALHWAAAVNNVEATLALLKNGANKDM), and 1972 to 2001 (KEETPLFLAAREGSYEAAKLLLDHLANREI). 2 disordered regions span residues 2025–2045 (LDQPSGPRSPSGPHGLGPLLC) and 2058–2126 (QSGT…PLEG). The segment covering 2028 to 2045 (PSGPRSPSGPHGLGPLLC) has biased composition (low complexity). Arginine 2174 carries the omega-N-methylarginine modification. The span at 2184–2193 (SFLLPLAPGP) shows a compositional bias: low complexity. Residues 2184-2318 (SFLLPLAPGP…EVTPKRQVMA (135 aa)) are disordered. The PEST-like stretch occupies residues 2242–2261 (HPYLTPSPESPEHWASPSPP). A compositionally biased stretch (low complexity) spans 2262 to 2282 (SLSDWSDSTPSPATATNATAS). The segment covering 2296 to 2305 (SLPQSQTQLG) has biased composition (polar residues).

This sequence belongs to the NOTCH family. As to quaternary structure, interacts with PSMA1. Heterodimer of a C-terminal fragment N(TM) and a N-terminal fragment N(EC) which are probably linked by disulfide bonds. Interacts with MAML1, MAML2 and MAML3 which act as transcriptional coactivators for NOTCH3. Interacts with HIF1AN. In terms of processing, synthesized in the endoplasmic reticulum as an inactive form which is proteolytically cleaved by a furin-like convertase in the trans-Golgi network before it reaches the plasma membrane to yield an active, ligand-accessible form. Cleavage results in a C-terminal fragment N(TM) and a N-terminal fragment N(EC). Following ligand binding, it is cleaved by TNF-alpha converting enzyme (TACE) to yield a membrane-associated intermediate fragment called notch extracellular truncation (NEXT). This fragment is then cleaved by presenilin dependent gamma-secretase to release a notch-derived peptide containing the intracellular domain (NICD) from the membrane. Phosphorylated. Post-translationally, hydroxylated by HIF1AN. Proliferating neuroepithelium.

It is found in the cell membrane. It localises to the nucleus. Functions as a receptor for membrane-bound ligands Jagged1, Jagged2 and Delta1 to regulate cell-fate determination. Upon ligand activation through the released notch intracellular domain (NICD) it forms a transcriptional activator complex with RBPJ/RBPSUH and activates genes of the enhancer of split locus. Affects the implementation of differentiation, proliferation and apoptotic programs. May play a role during CNS development. The chain is Neurogenic locus notch homolog protein 3 (Notch3) from Mus musculus (Mouse).